We begin with the raw amino-acid sequence, 792 residues long: Probable G-protein coupled receptor 156 (792 aa).

Over 1 to 49 (MEPEINCSEFCDSFPGQELDRRPLHDLCKTTITDSQHGSADISPLSPAL) the chain is Extracellular. Residue Asn6 is glycosylated (N-linked (GlcNAc...) asparagine). The chain crosses the membrane as a helical span at residues 50–70 (LGVIWTFLSCGLLLVLFFLAF). Over 71-86 (TIRCRKNRIVKMSSPN) the chain is Cytoplasmic. The helical transmembrane segment at 87–107 (LNIVTLLGSCLTYSSAYLFGI) threads the bilayer. Topologically, residues 108–118 (QDALVGSSVEA) are extracellular. Residues 119–139 (LIQTRLSLLCIGTTLVFGPIL) form a helical membrane-spanning segment. Over 140–164 (GKSWRLYKVFTQRVPDKRVIIKDLQ) the chain is Cytoplasmic. The helical transmembrane segment at 165-185 (LLGLVAALVVADVILLVTWVL) threads the bilayer. The Extracellular portion of the chain corresponds to 186–222 (TDPIQCLQILGVSMKVTGRDVSCSLTNTHFCASRYSD). A helical membrane pass occupies residues 223–243 (VWIALVLGCKGLLLLYGAYLA). Residues 244-257 (GLTNHVSSPPVNQS) are Cytoplasmic-facing. Residues 258 to 278 (LTIMVGVNLLLLTAGLLFVVT) traverse the membrane as a helical segment. Topologically, residues 279-287 (RYLHSWPNL) are extracellular. The helical transmembrane segment at 288–308 (VFGLTSGGIFVCTTTVNCCVF) threads the bilayer. At 309–792 (LPQLRQRKAF…FKDDLKPTLV (484 aa)) the chain is on the cytoplasmic side. A coiled-coil region spans residues 354-390 (EXSCMERLLTEKNAVIESLQEQVSNAKEKLVKLMSAE). Disordered regions lie at residues 407 to 457 (GGPA…KYDM), 469 to 516 (GCSQ…EVLP), and 538 to 704 (DLGT…QRQP). Over residues 422–434 (AAAEDSLPASAAS) the composition is skewed to low complexity. 2 stretches are compositionally biased toward basic and acidic residues: residues 443–457 (SRRD…KYDM) and 474–486 (PKAE…ERGN). Over residues 554–567 (PWKSNTSGSPQKLS) the composition is skewed to polar residues. Residues 578–589 (VRRRRAAQRARS) show a composition bias toward basic residues. Polar residues predominate over residues 602 to 619 (QANNTVSGSQNGLIVQNR). Residues 620–635 (DSPRLDHHNARSKEPR) show a composition bias toward basic and acidic residues. Low complexity predominate over residues 675-704 (PRQPSASAPAQSSTAPCLSSXPALPRQRQP).

This sequence belongs to the G-protein coupled receptor 3 family. GABA-B receptor subfamily. In terms of tissue distribution, widely expressed throughout the brain and is particularly dense in the olfactory tubercles, islands of Calleja, nucleus accumbens, piriform cortex and all fields of the hippocampus.

It localises to the cell membrane. Orphan G-protein coupled receptor involved in the regulation of hair cell orientation in mechanosensory organs of the inner ear. It is required to trigger a 180 degree reversal in hair cell orientation, creating a virtual line of polarity reversal (LPR) across which stereociliary bundles are arranged in opposite orientations. The sequence is that of Probable G-protein coupled receptor 156 (Gpr156) from Rattus norvegicus (Rat).